A 521-amino-acid polypeptide reads, in one-letter code: Proactivator polypeptide-like 1 (521 aa).

Positions M1–A17 are cleaved as a signal peptide. Positions S18 to A59 are excised as a propeptide. One can recognise a Saposin A-type 1 domain in the interval P19–A59. Saposin B-type domains are found at residues K60–Q144 and E180–G258. 3 disulfide bridges follow: C64-C140, C67-C134, and C95-C107. The propeptide occupies H146–E180. Intrachain disulfides connect C184–C254, C187–C248, and C213–C224. N201 carries N-linked (GlcNAc...) asparagine glycosylation. Positions A259–M288 are excised as a propeptide. 2 Saposin B-type domains span residues A290–R370 and Q392–R473. Intrachain disulfides connect C294–C366, C297–C360, and C325–C336. The N-linked (GlcNAc...) asparagine glycan is linked to N311. A propeptide spanning residues R370–N391 is cleaved from the precursor. 3 cysteine pairs are disulfide-bonded: C396/C469, C399/C463, and C427/C438. Positions T474 to A521 are excised as a propeptide. The region spanning P475–L515 is the Saposin A-type 2 domain.

The protein localises to the secreted. Functionally, may activate the lysosomal degradation of sphingolipids. The sequence is that of Proactivator polypeptide-like 1 (PSAPL1) from Homo sapiens (Human).